The sequence spans 255 residues: MHTPRKRFGQNFLIDDGIVHAIVNAIHPQAGETVVEIGPGLGALTRPLLERLPHLHAVELDRDIIARLRRAWPPERLTLHAGDALKFDFGSLGDDLRIVGNLPYNISTPLLFHLLEFAPRIRDMHFMLQKEVVERMVASPATADYGRLSIMLQRRFHMEWLLDVPPTAFDPPPKVESAVVRLIPKSTAEVPSVDEALFARVVAAAFAQRRKTLRNTLSALMRPEDFVALGIDPGLRAEALHVADYEAITAYLATR.

Residues Asn-11, Leu-13, Gly-38, Glu-59, Asp-83, and Asn-101 each coordinate S-adenosyl-L-methionine.

The protein belongs to the class I-like SAM-binding methyltransferase superfamily. rRNA adenine N(6)-methyltransferase family. RsmA subfamily.

It is found in the cytoplasm. The enzyme catalyses adenosine(1518)/adenosine(1519) in 16S rRNA + 4 S-adenosyl-L-methionine = N(6)-dimethyladenosine(1518)/N(6)-dimethyladenosine(1519) in 16S rRNA + 4 S-adenosyl-L-homocysteine + 4 H(+). Functionally, specifically dimethylates two adjacent adenosines (A1518 and A1519) in the loop of a conserved hairpin near the 3'-end of 16S rRNA in the 30S particle. May play a critical role in biogenesis of 30S subunits. This is Ribosomal RNA small subunit methyltransferase A from Thiobacillus denitrificans (strain ATCC 25259 / T1).